Here is a 433-residue protein sequence, read N- to C-terminus: sn-glycerol-3-phosphate-binding periplasmic protein UgpB (433 aa).

The first 25 residues, 1-25 (MFTRLITTSALTGAIALTIGSQAFA), serve as a signal peptide directing secretion. Sn-glycerol 3-phosphate-binding residues include Tyr67, Asp91, Ser146, Ser273, Gly307, Tyr346, and Arg397.

It belongs to the bacterial solute-binding protein 1 family. As to quaternary structure, the complex is composed of two ATP-binding proteins (UgpC), two transmembrane proteins (UgpA and UgpE) and a solute-binding protein (UgpB).

It is found in the periplasm. Functionally, part of the ABC transporter complex UgpBAEC involved in sn-glycerol-3-phosphate (G3P) import. Binds G3P. The chain is sn-glycerol-3-phosphate-binding periplasmic protein UgpB (ugpB) from Brucella melitensis biotype 1 (strain ATCC 23456 / CCUG 17765 / NCTC 10094 / 16M).